We begin with the raw amino-acid sequence, 327 residues long: Phenylalanine--tRNA ligase alpha subunit (327 aa).

Glu-252 is a binding site for Mg(2+).

This sequence belongs to the class-II aminoacyl-tRNA synthetase family. Phe-tRNA synthetase alpha subunit type 1 subfamily. Tetramer of two alpha and two beta subunits. Mg(2+) serves as cofactor.

It is found in the cytoplasm. It catalyses the reaction tRNA(Phe) + L-phenylalanine + ATP = L-phenylalanyl-tRNA(Phe) + AMP + diphosphate + H(+). This Shigella boydii serotype 18 (strain CDC 3083-94 / BS512) protein is Phenylalanine--tRNA ligase alpha subunit.